The sequence spans 358 residues: Cytoplasmic dynein 2 light intermediate chain 1 (358 aa).

Disordered regions lie at residues 1–35 (MPKV…EDAH) and 307–358 (ESTR…ALDP). The segment covering 24 to 33 (TDEEEAEEED) has biased composition (acidic residues). 2 stretches are compositionally biased toward basic and acidic residues: residues 307 to 320 (ESTR…DPVK) and 333 to 349 (RAQK…EQAK).

Belongs to the dynein light intermediate chain family. Light intermediate chain of the cytoplasmic dynein complex 2, a multisubunit complex composed at least of eleven different proteins. The cytoplasmic dynein 2 complex consists of two catalytic heavy chains (HCs) and a number of non-catalytic subunits presented by intermediate chains (ICs), light intermediate chains (LICs) and light chains (LCs). Among them, a heavy chain (DYNC2H1), two intermediate chains (DYNC2I2 and DYNC2I1), a light intermediate chain (DYNC2LI1), and a light chain (DYNLT2B) are unique to the dynein-2 complex, but a subset of light chains are also shared by dynein-1 and dynein-2 complexes. Dynein-2 complex is built around two copies of cytoplasmic dynein 2 heavy chain 1 (DYNC2H1). The C-terminal region forms the motor domain, which converts the energy from ATP hydrolysis into movement. Its N-terminal region forms the tail, an extended structure that binds the other subunits and holds the two heavy chains in a homodimer.

It is found in the cytoplasm. Its subcellular location is the cell projection. It localises to the cilium. The protein localises to the cytoskeleton. The protein resides in the cilium basal body. It is found in the cilium axoneme. Its subcellular location is the microtubule organizing center. It localises to the centrosome. Its function is as follows. Acts as one of several non-catalytic accessory components of the cytoplasmic dynein 2 complex (dynein-2 complex), a motor protein complex that drives the movement of cargos along microtubules within cilia and flagella in concert with the intraflagellar transport (IFT) system, facilitating the assembly of these organelles. This Danio rerio (Zebrafish) protein is Cytoplasmic dynein 2 light intermediate chain 1 (dync2li1).